Consider the following 463-residue polypeptide: Argininosuccinate lyase (463 aa).

The protein belongs to the lyase 1 family. Argininosuccinate lyase subfamily.

It is found in the cytoplasm. It carries out the reaction 2-(N(omega)-L-arginino)succinate = fumarate + L-arginine. Its pathway is amino-acid biosynthesis; L-arginine biosynthesis; L-arginine from L-ornithine and carbamoyl phosphate: step 3/3. The polypeptide is Argininosuccinate lyase (Methylorubrum populi (strain ATCC BAA-705 / NCIMB 13946 / BJ001) (Methylobacterium populi)).